The following is a 426-amino-acid chain: Mitogen-activated protein kinase 8 (426 aa).

The 296-residue stretch at tyrosine 26–isoleucine 321 folds into the Protein kinase domain. ATP contacts are provided by residues glycine 33–glycine 38 and lysine 55. The active-site Proton acceptor is aspartate 151. Threonine 183 is modified (phosphothreonine). Residues threonine 183 to tyrosine 185 carry the TXY motif. Residue tyrosine 185 is modified to Phosphotyrosine. Residues glutamine 375–arginine 426 form a disordered region. Low complexity predominate over residues threonine 384–aspartate 404. Polar residues predominate over residues proline 405 to glycine 420.

It belongs to the protein kinase superfamily. CMGC Ser/Thr protein kinase family. MAP kinase subfamily. It depends on Mg(2+) as a cofactor. Dually phosphorylated on Thr-183 and Tyr-185, which activates the enzyme. Strongly expressed in presumptive ectoderm and mesoderm regions and weakly expressed in endoderm regions during early stages of embryo development. Expressed in the head and dorsal regions during neurula and tailbud stages.

The protein resides in the cytoplasm. It is found in the nucleus. Its subcellular location is the synapse. The catalysed reaction is L-seryl-[protein] + ATP = O-phospho-L-seryl-[protein] + ADP + H(+). The enzyme catalyses L-threonyl-[protein] + ATP = O-phospho-L-threonyl-[protein] + ADP + H(+). Activated by threonine and tyrosine phosphorylation, potentially by the dual-specificity kinase, MKK7. Indirectly activated by Wnt5a. Responds to activation by environmental stress and pro-inflammatory cytokines by phosphorylating a number of transcription factors, and thus regulating transcriptional activity. Regulates morphogenic cell movements, controlling convergent extension during gastrulation. May play a role in the regulation of the circadian clock. This Xenopus laevis (African clawed frog) protein is Mitogen-activated protein kinase 8 (mapk8).